The chain runs to 432 residues: Glutamate-1-semialdehyde 2,1-aminomutase 1 (432 aa).

An N6-(pyridoxal phosphate)lysine modification is found at Lys268.

This sequence belongs to the class-III pyridoxal-phosphate-dependent aminotransferase family. HemL subfamily. As to quaternary structure, homodimer. Pyridoxal 5'-phosphate serves as cofactor.

The protein localises to the cytoplasm. It carries out the reaction (S)-4-amino-5-oxopentanoate = 5-aminolevulinate. It functions in the pathway porphyrin-containing compound metabolism; protoporphyrin-IX biosynthesis; 5-aminolevulinate from L-glutamyl-tRNA(Glu): step 2/2. The chain is Glutamate-1-semialdehyde 2,1-aminomutase 1 from Bacillus cereus (strain B4264).